Here is a 574-residue protein sequence, read N- to C-terminus: Myo-inositol transporter FST1 (574 aa).

The Cytoplasmic portion of the chain corresponds to 1-76 (MGKSRQNSTT…VQFANPKHFT (76 aa)). The chain crosses the membrane as a helical span at residues 77 to 97 (WLLVAFASMGGLLSGLDQSLI). Over 98 to 115 (SGANLFLPDDLGLTEHEN) the chain is Extracellular. The chain crosses the membrane as a helical span at residues 116–136 (SLVNSGMPLGAVGGALLLSPA). Over 137-143 (NEYFGRK) the chain is Cytoplasmic. Residues 144 to 164 (GAIIISIILYTIGAALEAGSI) traverse the membrane as a helical segment. Over 165–173 (NFGMIVSSR) the chain is Extracellular. A helical transmembrane segment spans residues 174–194 (VILGLGVGLEGGTVPVYVAET). Over 195 to 205 (VERRIRGNLVS) the chain is Cytoplasmic. A helical transmembrane segment spans residues 206–226 (LYQFNIALGEVLGYAVGAIFL). Residues 227–233 (NVPGNWR) are Extracellular-facing. A helical transmembrane segment spans residues 234 to 254 (YILGSSLLFSTIMFFGMLFLP). Residues 255–330 (ESPRFLIHQK…RARRALVYAN (76 aa)) lie on the Cytoplasmic side of the membrane. The chain crosses the membrane as a helical span at residues 331-351 (IMILLGQLTGVNAIMYYMSVL). Topologically, residues 352–363 (MNQIGFDKKESN) are extracellular. The chain crosses the membrane as a helical span at residues 364-384 (YMSLVGGGSLLLGTIPAIFLM). Residues 385-390 (ERFGRR) are Cytoplasmic-facing. Residues 391–411 (FWAITMLPGFFIGLVLIGVSY) traverse the membrane as a helical segment. The Extracellular segment spans residues 412–426 (QFDVETQLQTVEGLY). A helical membrane pass occupies residues 427–447 (LSGLIIYMGFFGSYACLTWVV). Residues 448 to 465 (PSEVYPTYLRSYGMTTSD) lie on the Cytoplasmic side of the membrane. The chain crosses the membrane as a helical span at residues 466–486 (ALLFLASFIVTYNFTAMQNAM). The Extracellular portion of the chain corresponds to 487-490 (GKTG). A helical membrane pass occupies residues 491 to 511 (LALGFYGGIAFIGEIYQIFFM). Topologically, residues 512 to 574 (PETKNKTLEE…PKDQVQVSHA (63 aa)) are cytoplasmic.

It belongs to the major facilitator superfamily. Sugar transporter (TC 2.A.1.1) family.

It is found in the cell membrane. The catalysed reaction is myo-inositol(out) + H(+)(out) = myo-inositol(in) + H(+)(in). Its function is as follows. Transporter for myo-inositol. Also appears to transport the polyketide mycotoxin fumonisin B1 (FB1). Does not appear to transport hexose sugars. The sequence is that of Myo-inositol transporter FST1 from Gibberella moniliformis (strain M3125 / FGSC 7600) (Maize ear and stalk rot fungus).